A 110-amino-acid polypeptide reads, in one-letter code: Small ribosomal subunit protein bS18c (110 aa).

Belongs to the bacterial ribosomal protein bS18 family. Part of the 30S ribosomal subunit.

The protein localises to the plastid. Its subcellular location is the chloroplast. This chain is Small ribosomal subunit protein bS18c (rps18), found in Pisum sativum (Garden pea).